We begin with the raw amino-acid sequence, 287 residues long: Homoserine kinase (287 aa).

Position 78–88 (78–88 (PLSRGLGSSST)) interacts with ATP.

It belongs to the GHMP kinase family. Homoserine kinase subfamily.

The protein resides in the cytoplasm. The enzyme catalyses L-homoserine + ATP = O-phospho-L-homoserine + ADP + H(+). The protein operates within amino-acid biosynthesis; L-threonine biosynthesis; L-threonine from L-aspartate: step 4/5. Its function is as follows. Catalyzes the ATP-dependent phosphorylation of L-homoserine to L-homoserine phosphate. The chain is Homoserine kinase from Lactobacillus gasseri (strain ATCC 33323 / DSM 20243 / BCRC 14619 / CIP 102991 / JCM 1131 / KCTC 3163 / NCIMB 11718 / NCTC 13722 / AM63).